Consider the following 36-residue polypeptide: Cytochrome b6-f complex subunit 7 (36 aa).

The Lumenal portion of the chain corresponds to 1-5 (NAAAE). A helical membrane pass occupies residues 6–28 (IFRIAAVMNGLTLVGVAIGFVLL). Over 29 to 36 (RIEATVEE) the chain is Stromal.

This sequence belongs to the PetM family. The 4 large subunits of the cytochrome b6-f complex are cytochrome b6, subunit IV (17 kDa polypeptide, PetD), cytochrome f and the Rieske protein, while the 4 small subunits are PetG, PetL, PetM and PetN. The complex functions as a dimer.

It is found in the plastid. The protein resides in the chloroplast thylakoid membrane. Its function is as follows. Component of the cytochrome b6-f complex, which mediates electron transfer between photosystem II (PSII) and photosystem I (PSI), cyclic electron flow around PSI, and state transitions. The chain is Cytochrome b6-f complex subunit 7 from Spinacia oleracea (Spinach).